We begin with the raw amino-acid sequence, 182 residues long: MASMAATTNFTKSMLFPFSHVSGNASLNSQRRTWPKQYKSKNGYRSLRVNGLFGGGNKDNNSEDGQSKAGIFGNMQNMYETVKKAQMVVQVEAVRVQKELAAAEFDGYCAGELVKVTLSGNQQPIRTDITEAAMELGSEKLSQLVTEAYKDAHAKSVVAMKERMSDLAQSLGMPPGLSEGMK.

The N-terminal 48 residues, 1-48 (MASMAATTNFTKSMLFPFSHVSGNASLNSQRRTWPKQYKSKNGYRSLR), are a transit peptide targeting the chloroplast.

It belongs to the YbaB/EbfC family. Homodimer. Interacts with ALB3 and ALB4.

The protein localises to the plastid. It is found in the chloroplast stroma. Functionally, participates with ALB4 in thylakoid protein targeting. May function with specific subset of thylakoidal proteins. Binds to DNA and alters its conformation. May be involved in regulation of gene expression, nucleoid organization and DNA protection. This is Nucleoid-associated protein At2g24020, chloroplastic from Arabidopsis thaliana (Mouse-ear cress).